The following is a 255-amino-acid chain: tRNA (guanine-N(7)-)-methyltransferase (255 aa).

S-adenosyl-L-methionine is bound by residues E86, E111, D138, and D161. D161 is a catalytic residue. Residues K165, D197, and 234–237 (TKFE) each bind substrate.

It belongs to the class I-like SAM-binding methyltransferase superfamily. TrmB family.

It catalyses the reaction guanosine(46) in tRNA + S-adenosyl-L-methionine = N(7)-methylguanosine(46) in tRNA + S-adenosyl-L-homocysteine. The protein operates within tRNA modification; N(7)-methylguanine-tRNA biosynthesis. In terms of biological role, catalyzes the formation of N(7)-methylguanine at position 46 (m7G46) in tRNA. This chain is tRNA (guanine-N(7)-)-methyltransferase, found in Pasteurella multocida (strain Pm70).